Consider the following 348-residue polypeptide: Anthranilate phosphoribosyltransferase (348 aa).

5-phospho-alpha-D-ribose 1-diphosphate-binding positions include Gly81, 84–85 (GD), 91–94 (NVST), 109–117 (KHGNRAVSG), and Ser121. Gly81 contributes to the anthranilate binding site. Residue Ser93 coordinates Mg(2+). Asn112 lines the anthranilate pocket. Residue Arg167 participates in anthranilate binding. Mg(2+) is bound by residues Asp226 and Glu227.

It belongs to the anthranilate phosphoribosyltransferase family. Homodimer. The cofactor is Mg(2+).

It catalyses the reaction N-(5-phospho-beta-D-ribosyl)anthranilate + diphosphate = 5-phospho-alpha-D-ribose 1-diphosphate + anthranilate. The protein operates within amino-acid biosynthesis; L-tryptophan biosynthesis; L-tryptophan from chorismate: step 2/5. Catalyzes the transfer of the phosphoribosyl group of 5-phosphorylribose-1-pyrophosphate (PRPP) to anthranilate to yield N-(5'-phosphoribosyl)-anthranilate (PRA). The polypeptide is Anthranilate phosphoribosyltransferase (Ectopseudomonas mendocina (strain ymp) (Pseudomonas mendocina)).